A 284-amino-acid chain; its full sequence is Bifunctional protein FolD (284 aa).

Residues 166 to 168 and I232 contribute to the NADP(+) site; that span reads GAS.

This sequence belongs to the tetrahydrofolate dehydrogenase/cyclohydrolase family. As to quaternary structure, homodimer.

It carries out the reaction (6R)-5,10-methylene-5,6,7,8-tetrahydrofolate + NADP(+) = (6R)-5,10-methenyltetrahydrofolate + NADPH. The enzyme catalyses (6R)-5,10-methenyltetrahydrofolate + H2O = (6R)-10-formyltetrahydrofolate + H(+). Its pathway is one-carbon metabolism; tetrahydrofolate interconversion. In terms of biological role, catalyzes the oxidation of 5,10-methylenetetrahydrofolate to 5,10-methenyltetrahydrofolate and then the hydrolysis of 5,10-methenyltetrahydrofolate to 10-formyltetrahydrofolate. The chain is Bifunctional protein FolD from Shewanella baltica (strain OS223).